Reading from the N-terminus, the 470-residue chain is Glutamate--tRNA ligase (470 aa).

A 'HIGH' region motif is present at residues 9-19; that stretch reads PSPTGFLHVGG. The 'KMSKS' region signature appears at 236–240; that stretch reads RLSKR. Lys-239 contributes to the ATP binding site.

Belongs to the class-I aminoacyl-tRNA synthetase family. Glutamate--tRNA ligase type 1 subfamily. As to quaternary structure, monomer.

Its subcellular location is the cytoplasm. It catalyses the reaction tRNA(Glu) + L-glutamate + ATP = L-glutamyl-tRNA(Glu) + AMP + diphosphate. Its function is as follows. Catalyzes the attachment of glutamate to tRNA(Glu) in a two-step reaction: glutamate is first activated by ATP to form Glu-AMP and then transferred to the acceptor end of tRNA(Glu). The chain is Glutamate--tRNA ligase from Legionella pneumophila (strain Corby).